A 380-amino-acid chain; its full sequence is Probable inactive reductase easA (380 aa).

Residues 25 to 27, A60, Q102, and H171 each bind FMN; that span reads PMT. 2 residues coordinate substrate: H171 and N174. FMN-binding positions include K223, G299, 324-325, and R325; that span reads GR. Y352 is a binding site for substrate.

This sequence belongs to the NADH:flavin oxidoreductase/NADH oxidase family.

In terms of biological role, probable inactive dehydrogenase; part of the gene cluster that mediates the biosynthesis of fungal ergot alkaloid ergovaline, the predominant ergopeptine product in E.festucae var. lolii. DmaW catalyzes the first step of ergot alkaloid biosynthesis by condensing dimethylallyl diphosphate (DMAP) and tryptophan to form 4-dimethylallyl-L-tryptophan. The second step is catalyzed by the methyltransferase easF that methylates 4-dimethylallyl-L-tryptophan in the presence of S-adenosyl-L-methionine, resulting in the formation of 4-dimethylallyl-L-abrine. The catalase easC and the FAD-dependent oxidoreductase easE then transform 4-dimethylallyl-L-abrine to chanoclavine-I which is further oxidized by easD in the presence of NAD(+), resulting in the formation of chanoclavine-I aldehyde. Agroclavine dehydrogenase easG then mediates the conversion of chanoclavine-I aldehyde to agroclavine via a non-enzymatic adduct reaction: the substrate is an iminium intermediate that is formed spontaneously from chanoclavine-I aldehyde in the presence of glutathione. The presence of easA is not required to complete this reaction. Further conversion of agroclavine to paspalic acid is a two-step process involving oxidation of agroclavine to elymoclavine and of elymoclavine to paspalic acid, the second step being performed by the elymoclavine oxidase cloA. Paspalic acid is then further converted to D-lysergic acid. Ergovaline is assembled from D-lysergic acid and three different amino acids by the D-lysergyl-peptide-synthetase composed of a monomudular (lpsB) and a trimodular (lpsA) nonribosomal peptide synthetase subunit. In Epichloe festucae var. lolii (Neotyphodium lolii), this protein is Probable inactive reductase easA.